The following is a 156-amino-acid chain: Ribosomal RNA large subunit methyltransferase H (156 aa).

S-adenosyl-L-methionine-binding positions include Leu-73, Gly-104, and 123–128; that span reads LSALTL.

It belongs to the RNA methyltransferase RlmH family. As to quaternary structure, homodimer.

It localises to the cytoplasm. The catalysed reaction is pseudouridine(1915) in 23S rRNA + S-adenosyl-L-methionine = N(3)-methylpseudouridine(1915) in 23S rRNA + S-adenosyl-L-homocysteine + H(+). Its function is as follows. Specifically methylates the pseudouridine at position 1915 (m3Psi1915) in 23S rRNA. This is Ribosomal RNA large subunit methyltransferase H from Colwellia psychrerythraea (strain 34H / ATCC BAA-681) (Vibrio psychroerythus).